Here is a 266-residue protein sequence, read N- to C-terminus: Phosphoethanolamine N-methyltransferase (266 aa).

Gln-18 is a binding site for phosphoethanolamine. Residue Tyr-19 is part of the active site. Phosphoethanolamine is bound at residue Tyr-27. S-adenosyl-L-methionine contacts are provided by Ile-36, Ser-37, Gly-63, Asp-85, Ile-86, Asp-110, Ile-111, and Arg-127. His-132 is a catalytic residue. Positions 160, 175, 179, 181, and 247 each coordinate phosphoethanolamine.

It belongs to the class I-like SAM-binding methyltransferase superfamily. PEAMT family. In terms of assembly, monomer.

It is found in the golgi apparatus membrane. Its subcellular location is the cytoplasm. The enzyme catalyses phosphoethanolamine + S-adenosyl-L-methionine = N-methylethanolamine phosphate + S-adenosyl-L-homocysteine + H(+). It catalyses the reaction N-methylethanolamine phosphate + S-adenosyl-L-methionine = N,N-dimethylethanolamine phosphate + S-adenosyl-L-homocysteine + H(+). The catalysed reaction is N,N-dimethylethanolamine phosphate + S-adenosyl-L-methionine = phosphocholine + S-adenosyl-L-homocysteine + H(+). Its pathway is phospholipid metabolism; phosphatidylcholine biosynthesis; phosphocholine from phosphoethanolamine. With respect to regulation, inhibited by phosphocholine. Inhibited by hexadecylphosphocholine (miltefosine). Inhibited by S-adenosyl-l-homocysteine. Weakly inhibited in vitro by amodiaquine, chloroquine and primaquine. Inhibited by NSC-158011. Its function is as follows. Catalyzes N-methylation of phosphoethanolamine, phosphomonomethylethanolamine and phosphodimethylethanolamine, the three methylation steps required to convert phosphoethanolamine to phosphocholine. Has no ethanolamine- or phosphatidylethanolamine-N-methyltransferase activity. Required for gametocyte development, maturation and transmission to mosquitoes and for oocyst formation in the mosquito midgut. This Plasmodium falciparum (isolate 3D7) protein is Phosphoethanolamine N-methyltransferase.